We begin with the raw amino-acid sequence, 146 residues long: Large ribosomal subunit protein uL15 (146 aa).

The disordered stretch occupies residues 1–53 (MILSNLKPVPGARHSKKRLGRGPGSGTGKTSGKGHKGQKARSGGGVRPGFEGG). Gly residues-rich tracts occupy residues 21–31 (RGPGSGTGKTS) and 42–52 (SGGGVRPGFEG).

The protein belongs to the universal ribosomal protein uL15 family. In terms of assembly, part of the 50S ribosomal subunit.

Functionally, binds to the 23S rRNA. In Acholeplasma laidlawii (strain PG-8A), this protein is Large ribosomal subunit protein uL15.